A 383-amino-acid polypeptide reads, in one-letter code: Oxysterol-binding protein-related protein 4B (383 aa).

The protein belongs to the OSBP family. As to expression, expressed in stems and flowers.

Functionally, may be involved in the transport of sterols. This chain is Oxysterol-binding protein-related protein 4B (ORP4B), found in Arabidopsis thaliana (Mouse-ear cress).